The sequence spans 210 residues: Large ribosomal subunit protein uL22 (210 aa).

A disordered region spans residues 123 to 210 (NEMTSKETVK…TKSTKKEGSK (88 aa)). The segment covering 126-157 (TSKETVKEPAKKPSAKVEKPAEAKAPKQETST) has biased composition (basic and acidic residues). Positions 158-185 (KKPTTTTESKPKTSKAPAQKQAAKVAKP) are enriched in low complexity.

The protein belongs to the universal ribosomal protein uL22 family. In terms of assembly, part of the 50S ribosomal subunit.

In terms of biological role, this protein binds specifically to 23S rRNA; its binding is stimulated by other ribosomal proteins, e.g. L4, L17, and L20. It is important during the early stages of 50S assembly. It makes multiple contacts with different domains of the 23S rRNA in the assembled 50S subunit and ribosome. Its function is as follows. The globular domain of the protein is located near the polypeptide exit tunnel on the outside of the subunit, while an extended beta-hairpin is found that lines the wall of the exit tunnel in the center of the 70S ribosome. This is Large ribosomal subunit protein uL22 from Metamycoplasma arthritidis (strain 158L3-1) (Mycoplasma arthritidis).